A 572-amino-acid polypeptide reads, in one-letter code: Proline--tRNA ligase (572 aa).

This sequence belongs to the class-II aminoacyl-tRNA synthetase family. ProS type 1 subfamily. Homodimer.

The protein localises to the cytoplasm. It catalyses the reaction tRNA(Pro) + L-proline + ATP = L-prolyl-tRNA(Pro) + AMP + diphosphate. In terms of biological role, catalyzes the attachment of proline to tRNA(Pro) in a two-step reaction: proline is first activated by ATP to form Pro-AMP and then transferred to the acceptor end of tRNA(Pro). As ProRS can inadvertently accommodate and process non-cognate amino acids such as alanine and cysteine, to avoid such errors it has two additional distinct editing activities against alanine. One activity is designated as 'pretransfer' editing and involves the tRNA(Pro)-independent hydrolysis of activated Ala-AMP. The other activity is designated 'posttransfer' editing and involves deacylation of mischarged Ala-tRNA(Pro). The misacylated Cys-tRNA(Pro) is not edited by ProRS. This is Proline--tRNA ligase from Salmonella arizonae (strain ATCC BAA-731 / CDC346-86 / RSK2980).